A 249-amino-acid polypeptide reads, in one-letter code: MADS-box transcription factor 17 (249 aa).

The MADS-box domain occupies Met1 to Gly61. The K-box domain occupies His88–Ser178. The interval Ala228–Leu249 is disordered.

May interact with the K-box of MADS6. Expressed in the floral meristem, lodicule, palea, lemma, receptacle, empty glume, stamen, pistil, and ovule.

The protein localises to the nucleus. Its function is as follows. Probable transcription factor. Plays minor but redundant roles with MADS6 in floral development. The protein is MADS-box transcription factor 17 (MADS17) of Oryza sativa subsp. japonica (Rice).